The primary structure comprises 241 residues: Ribosomal RNA small subunit methyltransferase G (241 aa).

Residues glycine 79, phenylalanine 84, alanine 130 to glutamate 131, and arginine 150 contribute to the S-adenosyl-L-methionine site.

This sequence belongs to the methyltransferase superfamily. RNA methyltransferase RsmG family.

The protein localises to the cytoplasm. Specifically methylates the N7 position of a guanine in 16S rRNA. This Ligilactobacillus salivarius (strain UCC118) (Lactobacillus salivarius) protein is Ribosomal RNA small subunit methyltransferase G.